We begin with the raw amino-acid sequence, 371 residues long: Chaperone protein DnaJ (371 aa).

The region spanning Asp-4–Gly-68 is the J domain. Residues Gly-134–Gln-212 form a CR-type zinc finger. Zn(2+) is bound by residues Cys-147, Cys-150, Cys-164, Cys-167, Cys-186, Cys-189, Cys-200, and Cys-203. CXXCXGXG motif repeat units follow at residues Cys-147–Gly-154, Cys-164–Gly-171, Cys-186–Gly-193, and Cys-200–Gly-207.

This sequence belongs to the DnaJ family. As to quaternary structure, homodimer. Zn(2+) serves as cofactor.

It is found in the cytoplasm. Participates actively in the response to hyperosmotic and heat shock by preventing the aggregation of stress-denatured proteins and by disaggregating proteins, also in an autonomous, DnaK-independent fashion. Unfolded proteins bind initially to DnaJ; upon interaction with the DnaJ-bound protein, DnaK hydrolyzes its bound ATP, resulting in the formation of a stable complex. GrpE releases ADP from DnaK; ATP binding to DnaK triggers the release of the substrate protein, thus completing the reaction cycle. Several rounds of ATP-dependent interactions between DnaJ, DnaK and GrpE are required for fully efficient folding. Also involved, together with DnaK and GrpE, in the DNA replication of plasmids through activation of initiation proteins. The polypeptide is Chaperone protein DnaJ (Rickettsia akari (strain Hartford)).